A 181-amino-acid polypeptide reads, in one-letter code: Peptide deformylase 1 (181 aa).

Fe cation contacts are provided by Cys-106 and His-148. Residue Glu-149 is part of the active site. His-152 is a binding site for Fe cation.

This sequence belongs to the polypeptide deformylase family. The cofactor is Fe(2+).

The enzyme catalyses N-terminal N-formyl-L-methionyl-[peptide] + H2O = N-terminal L-methionyl-[peptide] + formate. In terms of biological role, removes the formyl group from the N-terminal Met of newly synthesized proteins. Requires at least a dipeptide for an efficient rate of reaction. N-terminal L-methionine is a prerequisite for activity but the enzyme has broad specificity at other positions. The chain is Peptide deformylase 1 from Burkholderia multivorans (strain ATCC 17616 / 249).